The chain runs to 756 residues: 5-methyltetrahydropteroyltriglutamate--homocysteine methyltransferase (756 aa).

5-methyltetrahydropteroyltri-L-glutamate contacts are provided by residues 16–19 and Lys-112; that span reads RELK. L-homocysteine is bound by residues 432–434 and Glu-485; that span reads IGS. Residues 432–434 and Glu-485 each bind L-methionine; that span reads IGS. 5-methyltetrahydropteroyltri-L-glutamate-binding positions include 516-517 and Trp-562; that span reads RC. Asp-600 provides a ligand contact to L-homocysteine. Asp-600 lines the L-methionine pocket. 5-methyltetrahydropteroyltri-L-glutamate is bound at residue Glu-606. Residues His-642, Cys-644, and Glu-666 each coordinate Zn(2+). His-695 functions as the Proton donor in the catalytic mechanism. Residue Cys-727 participates in Zn(2+) binding.

It belongs to the vitamin-B12 independent methionine synthase family. The cofactor is Zn(2+).

The enzyme catalyses 5-methyltetrahydropteroyltri-L-glutamate + L-homocysteine = tetrahydropteroyltri-L-glutamate + L-methionine. It functions in the pathway amino-acid biosynthesis; L-methionine biosynthesis via de novo pathway; L-methionine from L-homocysteine (MetE route): step 1/1. Catalyzes the transfer of a methyl group from 5-methyltetrahydrofolate to homocysteine resulting in methionine formation. This Haemophilus influenzae (strain PittEE) protein is 5-methyltetrahydropteroyltriglutamate--homocysteine methyltransferase.